The sequence spans 335 residues: Fimbrial adhesin PapGI (335 aa).

Residues Met1–Ala21 form the signal peptide.

Belongs to the adhesin PapG family. Interacts with chaperone PapD. Assembly of the P pilus requires periplasmic chaperone PapD, in absence of the chaperone overexpression of this subunit is toxic, where the protein accumulates in the periplasm. PapD stimulates release of PapG from an inner membrane-associated form (where at least 1 disulfide bond can form) into the periplasm and also helps it achieve its correct digalactoside-binding conformation. Post-translationally, contains disulfide bonds.

Its subcellular location is the secreted. The protein localises to the fimbrium. Tip adhesin component of type P pili that binds preferentially to host cell glycosphingolipids such as globotriaosylceramide. This chain is Fimbrial adhesin PapGI, found in Escherichia coli.